The following is a 382-amino-acid chain: Lipid-A-disaccharide synthase (382 aa).

Belongs to the LpxB family.

It catalyses the reaction 2-N,3-O-bis[(3R)-3-hydroxytetradecanoyl]-alpha-D-glucosaminyl 1-phosphate + UDP-2-N,3-O-bis[(3R)-3-hydroxytetradecanoyl]-alpha-D-glucosamine = lipid A disaccharide (E. coli) + UDP + H(+). The enzyme catalyses a lipid X + a UDP-2-N,3-O-bis[(3R)-3-hydroxyacyl]-alpha-D-glucosamine = a lipid A disaccharide + UDP + H(+). It functions in the pathway glycolipid biosynthesis; lipid IV(A) biosynthesis; lipid IV(A) from (3R)-3-hydroxytetradecanoyl-[acyl-carrier-protein] and UDP-N-acetyl-alpha-D-glucosamine: step 5/6. In terms of biological role, condensation of UDP-2,3-diacylglucosamine and 2,3-diacylglucosamine-1-phosphate to form lipid A disaccharide, a precursor of lipid A, a phosphorylated glycolipid that anchors the lipopolysaccharide to the outer membrane of the cell. In Sodalis glossinidius (strain morsitans), this protein is Lipid-A-disaccharide synthase.